Reading from the N-terminus, the 140-residue chain is Protein KRTCAP2 homolog (140 aa).

The next 4 membrane-spanning stretches (helical) occupy residues 11–31, 40–60, 74–94, and 98–118; these read LLSS…LRFC, LNVL…LTCV, AKLV…AGIV, and CATT…RISI.

It belongs to the KRTCAP2 family. As to quaternary structure, component of the oligosaccharyltransferase (OST) complex.

It is found in the membrane. In terms of biological role, subunit of the oligosaccharyl transferase (OST) complex that catalyzes the initial transfer of a defined glycan (Glc(3)Man(9)GlcNAc(2) in eukaryotes) from the lipid carrier dolichol-pyrophosphate to an asparagine residue within an Asn-X-Ser/Thr consensus motif in nascent polypeptide chains, the first step in protein N-glycosylation. N-glycosylation occurs cotranslationally and the complex associates with the Sec61 complex at the channel-forming translocon complex that mediates protein translocation across the endoplasmic reticulum (ER). All subunits are required for a maximal enzyme activity. This Drosophila pseudoobscura pseudoobscura (Fruit fly) protein is Protein KRTCAP2 homolog.